The sequence spans 470 residues: MSDATDPGWFPLALRLRGARVVVVGGGGIALNKVRLLLAHAARIDILAPRLEDTLAAWQAEGRITHIAGEATPDRVRALLPGSRLVYAATDDRAVNRAVAAQADALNIPVCAVDDPEPSSFITPAQIHRGPVRIAISTGGAAPVLARRLRERIEAVMPAGLDALARFLQAERAHVVAACPDIGRRRRVWEDFLDGPGGEAAQRGEHAAARQVLDHLLAGAQTGGEVWLVGAGPGDPDLLTLRALHLMQNADSVLYDQLLPPALMDRVRRDAERVFVGKQRDRHTMPQDDINAELIRRARAGERVLRLKGGDPFIFGRGGEEIEALMAAGIPFQVVPGITAASGCAAYAGIPLTHRDCAQSCLFVTGHARRDGTLDLPWDSMARPGQTIAIYMGVTALPDLCTMLVRHGLPPDWPAAVVERGTRPDQRVLTGTLADLPALARAHAVGSPALVLVGQVVRHRVVTPPPLSGT.

The interval 1–213 is precorrin-2 dehydrogenase /sirohydrochlorin ferrochelatase; it reads MSDATDPGWF…GEHAAARQVL (213 aa). NAD(+) is bound by residues 28-29 and 49-50; these read GI and PR. A uroporphyrinogen-III C-methyltransferase region spans residues 224–470; the sequence is GEVWLVGAGP…VVTPPPLSGT (247 aa). Residue Pro233 participates in S-adenosyl-L-methionine binding. Catalysis depends on Asp256, which acts as the Proton acceptor. Lys278 serves as the catalytic Proton donor. S-adenosyl-L-methionine-binding positions include 309–311, Ile314, 339–340, Met392, and Gly421; these read GGD and TA.

It in the N-terminal section; belongs to the precorrin-2 dehydrogenase / sirohydrochlorin ferrochelatase family. In the C-terminal section; belongs to the precorrin methyltransferase family.

It catalyses the reaction uroporphyrinogen III + 2 S-adenosyl-L-methionine = precorrin-2 + 2 S-adenosyl-L-homocysteine + H(+). The catalysed reaction is precorrin-2 + NAD(+) = sirohydrochlorin + NADH + 2 H(+). The enzyme catalyses siroheme + 2 H(+) = sirohydrochlorin + Fe(2+). Its pathway is cofactor biosynthesis; adenosylcobalamin biosynthesis; precorrin-2 from uroporphyrinogen III: step 1/1. It functions in the pathway cofactor biosynthesis; adenosylcobalamin biosynthesis; sirohydrochlorin from precorrin-2: step 1/1. It participates in porphyrin-containing compound metabolism; siroheme biosynthesis; precorrin-2 from uroporphyrinogen III: step 1/1. The protein operates within porphyrin-containing compound metabolism; siroheme biosynthesis; siroheme from sirohydrochlorin: step 1/1. Its pathway is porphyrin-containing compound metabolism; siroheme biosynthesis; sirohydrochlorin from precorrin-2: step 1/1. Functionally, multifunctional enzyme that catalyzes the SAM-dependent methylations of uroporphyrinogen III at position C-2 and C-7 to form precorrin-2 via precorrin-1. Then it catalyzes the NAD-dependent ring dehydrogenation of precorrin-2 to yield sirohydrochlorin. Finally, it catalyzes the ferrochelation of sirohydrochlorin to yield siroheme. In Gluconacetobacter diazotrophicus (strain ATCC 49037 / DSM 5601 / CCUG 37298 / CIP 103539 / LMG 7603 / PAl5), this protein is Siroheme synthase.